The sequence spans 264 residues: Exosome complex component Rrp4 (264 aa).

The S1 motif domain maps to glycine 65–lysine 137. The 60-residue stretch at arginine 147 to isoleucine 206 folds into the KH domain. Residues serine 244–aspartate 258 show a composition bias toward acidic residues. A disordered region spans residues serine 244–proline 264.

This sequence belongs to the RRP4 family. In terms of assembly, component of the archaeal exosome complex. Forms a trimer of Rrp4 and/or Csl4 subunits. The trimer associates with a hexameric ring-like arrangement composed of 3 Rrp41-Rrp42 heterodimers.

It localises to the cytoplasm. Its function is as follows. Non-catalytic component of the exosome, which is a complex involved in RNA degradation. Increases the RNA binding and the efficiency of RNA degradation. Confers strong poly(A) specificity to the exosome. The sequence is that of Exosome complex component Rrp4 from Pyrococcus furiosus (strain ATCC 43587 / DSM 3638 / JCM 8422 / Vc1).